Consider the following 443-residue polypeptide: MSSQLPILTVSQLNRQVKGFLENEIGLVHVEGEISNLSKPSSGHYYFTLKDSTAQIRCAFFKNRHSNSLLRNFNDGQQIVATGKLSLYEARGEYQLIVEEIVKAGMGILYQRFEELKIKLASEGLFNPERKKPLPRIPETIGIITSPTGAAIQDILSTLARRFPIARIIIYPSEVQGQTAPQQLVKALKLANAHKRCQVLILARGGGSIEDLWAFNDEYLARQIAISEIPVVSGIGHETDFTIADFVADYRAETPTAAATAVTPNCIELFNILDTAIYRLHDAIIRLVKGLQLKLNHLIDKIASPRQTISTYWQTLDYLERQLISAMTQFINLNINKVNIFSTQLQANNPKTQIERTKTQLRQLIMQLNQEIRIQVNQLKNQLSTNLSTLHAVSPLATLDRGYAIVSKNQRILFAAQQAQIGDTIDVRLAKGSLACEVTQIKD.

The protein belongs to the XseA family. As to quaternary structure, heterooligomer composed of large and small subunits.

The protein resides in the cytoplasm. The enzyme catalyses Exonucleolytic cleavage in either 5'- to 3'- or 3'- to 5'-direction to yield nucleoside 5'-phosphates.. Its function is as follows. Bidirectionally degrades single-stranded DNA into large acid-insoluble oligonucleotides, which are then degraded further into small acid-soluble oligonucleotides. The protein is Exodeoxyribonuclease 7 large subunit of Legionella pneumophila (strain Paris).